We begin with the raw amino-acid sequence, 274 residues long: Nitrogenase iron protein (274 aa).

Glycine 8–serine 15 is a binding site for ATP. A [4Fe-4S] cluster-binding site is contributed by cysteine 94. At arginine 97 the chain carries ADP-ribosylarginine; by dinitrogenase reductase ADP-ribosyltransferase. Cysteine 131 is a binding site for [4Fe-4S] cluster.

Belongs to the NifH/BchL/ChlL family. As to quaternary structure, homodimer. The cofactor is [4Fe-4S] cluster. Post-translationally, the reversible ADP-ribosylation of Arg-97 inactivates the nitrogenase reductase and regulates nitrogenase activity.

The enzyme catalyses N2 + 8 reduced [2Fe-2S]-[ferredoxin] + 16 ATP + 16 H2O = H2 + 8 oxidized [2Fe-2S]-[ferredoxin] + 2 NH4(+) + 16 ADP + 16 phosphate + 6 H(+). Its function is as follows. The key enzymatic reactions in nitrogen fixation are catalyzed by the nitrogenase complex, which has 2 components: the iron protein and the molybdenum-iron protein. This is Nitrogenase iron protein from Dehalococcoides mccartyi (strain ATCC BAA-2266 / KCTC 15142 / 195) (Dehalococcoides ethenogenes (strain 195)).